A 433-amino-acid chain; its full sequence is 23S rRNA (uracil(1939)-C(5))-methyltransferase RlmD (433 aa).

The TRAM domain occupies 1–53; the sequence is MPTAVIESLDHEGRGIARVEGKAVFIEGGLPGETVEYRVLRSKPNYEQAEATR. Residues Cys66, Cys72, Cys75, and Cys154 each contribute to the [4Fe-4S] cluster site. S-adenosyl-L-methionine-binding residues include Gln263, Phe292, Asn297, Glu313, Asn341, and Asp362. The active-site Nucleophile is the Cys389.

This sequence belongs to the class I-like SAM-binding methyltransferase superfamily. RNA M5U methyltransferase family. RlmD subfamily.

It catalyses the reaction uridine(1939) in 23S rRNA + S-adenosyl-L-methionine = 5-methyluridine(1939) in 23S rRNA + S-adenosyl-L-homocysteine + H(+). Functionally, catalyzes the formation of 5-methyl-uridine at position 1939 (m5U1939) in 23S rRNA. The chain is 23S rRNA (uracil(1939)-C(5))-methyltransferase RlmD from Azoarcus sp. (strain BH72).